Consider the following 354-residue polypeptide: UDP-N-acetylglucosamine--N-acetylmuramyl-(pentapeptide) pyrophosphoryl-undecaprenol N-acetylglucosamine transferase (354 aa).

UDP-N-acetyl-alpha-D-glucosamine is bound by residues 15–17, N127, R163, S191, I244, 263–268, and Q288; these read TGG and ALTVSE.

This sequence belongs to the glycosyltransferase 28 family. MurG subfamily.

The protein localises to the cell inner membrane. It carries out the reaction di-trans,octa-cis-undecaprenyl diphospho-N-acetyl-alpha-D-muramoyl-L-alanyl-D-glutamyl-meso-2,6-diaminopimeloyl-D-alanyl-D-alanine + UDP-N-acetyl-alpha-D-glucosamine = di-trans,octa-cis-undecaprenyl diphospho-[N-acetyl-alpha-D-glucosaminyl-(1-&gt;4)]-N-acetyl-alpha-D-muramoyl-L-alanyl-D-glutamyl-meso-2,6-diaminopimeloyl-D-alanyl-D-alanine + UDP + H(+). Its pathway is cell wall biogenesis; peptidoglycan biosynthesis. Functionally, cell wall formation. Catalyzes the transfer of a GlcNAc subunit on undecaprenyl-pyrophosphoryl-MurNAc-pentapeptide (lipid intermediate I) to form undecaprenyl-pyrophosphoryl-MurNAc-(pentapeptide)GlcNAc (lipid intermediate II). In Aliivibrio salmonicida (strain LFI1238) (Vibrio salmonicida (strain LFI1238)), this protein is UDP-N-acetylglucosamine--N-acetylmuramyl-(pentapeptide) pyrophosphoryl-undecaprenol N-acetylglucosamine transferase.